A 187-amino-acid chain; its full sequence is Ribosome-recycling factor (187 aa).

This sequence belongs to the RRF family.

The protein resides in the cytoplasm. Functionally, responsible for the release of ribosomes from messenger RNA at the termination of protein biosynthesis. May increase the efficiency of translation by recycling ribosomes from one round of translation to another. In Parvibaculum lavamentivorans (strain DS-1 / DSM 13023 / NCIMB 13966), this protein is Ribosome-recycling factor.